We begin with the raw amino-acid sequence, 364 residues long: Small ribosomal subunit biogenesis GTPase RsgA (364 aa).

The CP-type G domain maps to 101 to 264 (KGLVEKPGVP…VIDTPGLREL (164 aa)). GTP contacts are provided by residues 154–157 (NKSD) and 206–214 (GSSGAGKST). Positions 288, 293, 295, and 301 each coordinate Zn(2+). Positions 339-364 (QVAQKRKRKTIPRQGKRWRREHGDGQ) are disordered. Positions 342–358 (QKRKRKTIPRQGKRWRR) are enriched in basic residues.

This sequence belongs to the TRAFAC class YlqF/YawG GTPase family. RsgA subfamily. Monomer. Associates with 30S ribosomal subunit, binds 16S rRNA. Zn(2+) serves as cofactor.

It is found in the cytoplasm. In terms of biological role, one of several proteins that assist in the late maturation steps of the functional core of the 30S ribosomal subunit. Helps release RbfA from mature subunits. May play a role in the assembly of ribosomal proteins into the subunit. Circularly permuted GTPase that catalyzes slow GTP hydrolysis, GTPase activity is stimulated by the 30S ribosomal subunit. This Syntrophotalea carbinolica (strain DSM 2380 / NBRC 103641 / GraBd1) (Pelobacter carbinolicus) protein is Small ribosomal subunit biogenesis GTPase RsgA.